The following is a 274-amino-acid chain: Diaminopimelate epimerase (274 aa).

Substrate is bound by residues N11, Q44, and N64. C73 (proton donor) is an active-site residue. Residues 74–75 (GN), N157, N190, and 208–209 (ER) contribute to the substrate site. C217 functions as the Proton acceptor in the catalytic mechanism. Residue 218 to 219 (GS) coordinates substrate.

This sequence belongs to the diaminopimelate epimerase family. In terms of assembly, homodimer.

It localises to the cytoplasm. It catalyses the reaction (2S,6S)-2,6-diaminopimelate = meso-2,6-diaminopimelate. It participates in amino-acid biosynthesis; L-lysine biosynthesis via DAP pathway; DL-2,6-diaminopimelate from LL-2,6-diaminopimelate: step 1/1. Its function is as follows. Catalyzes the stereoinversion of LL-2,6-diaminopimelate (L,L-DAP) to meso-diaminopimelate (meso-DAP), a precursor of L-lysine and an essential component of the bacterial peptidoglycan. This is Diaminopimelate epimerase from Sodalis glossinidius (strain morsitans).